The sequence spans 199 residues: MTYALPELDYAYDALEPHIAAEIMELHHSKHHANYVNGANAALEKLQKARENGEIGAVVTALSKDLAFNLGGHTNHSIFWKNLSPNGGGEPTGALAEAIAKEFGSFEKFKDHFSAAALGLQGSGWAVLGYDHIGGRLVIEQLTDQQGNISANLTPLLMLDMWEHAFYLQYKNVKADYVKAVWNVFNWDDVAARFEAATK.

Residues His-27, His-76, Asp-160, and His-164 each contribute to the Mn(2+) site.

Belongs to the iron/manganese superoxide dismutase family. It depends on Mn(2+) as a cofactor.

The enzyme catalyses 2 superoxide + 2 H(+) = H2O2 + O2. Its function is as follows. Destroys superoxide anion radicals which are normally produced within the cells and which are toxic to biological systems. In Corynebacterium diphtheriae (strain ATCC 700971 / NCTC 13129 / Biotype gravis), this protein is Superoxide dismutase [Mn] (sodA).